We begin with the raw amino-acid sequence, 511 residues long: Sodium/proline symporter (511 aa).

Helical transmembrane passes span 16 to 36 (WQTY…GFYG), 54 to 74 (IGPY…WMIM), 85 to 105 (LSAI…YFVV), 139 to 159 (IISG…GFVS), 175 to 195 (GLLI…YLAV), 199 to 219 (DFFQ…VALL), 246 to 266 (VLGI…PHII), 284 to 304 (LGIS…LTGI), 327 to 347 (ILFH…AIMS), 381 to 401 (FVLI…TIAW), 407 to 427 (ILNL…PLVL), 438 to 458 (AGAI…ISWI), and 467 to 487 (FFGM…TYIV).

The protein belongs to the sodium:solute symporter (SSF) (TC 2.A.21) family.

The protein localises to the cell membrane. It carries out the reaction L-proline(in) + Na(+)(in) = L-proline(out) + Na(+)(out). Catalyzes the sodium-dependent uptake of extracellular L-proline. The chain is Sodium/proline symporter (putP) from Staphylococcus epidermidis (strain ATCC 12228 / FDA PCI 1200).